Here is a 1178-residue protein sequence, read N- to C-terminus: DNA-directed RNA polymerase subunit beta' (1178 aa).

Zn(2+) contacts are provided by cysteine 60, cysteine 62, cysteine 75, and cysteine 78. Mg(2+) contacts are provided by aspartate 450, aspartate 452, and aspartate 454. The Zn(2+) site is built by cysteine 795, cysteine 869, cysteine 876, and cysteine 879.

Belongs to the RNA polymerase beta' chain family. In terms of assembly, the RNAP catalytic core consists of 2 alpha, 1 beta, 1 beta' and 1 omega subunit. When a sigma factor is associated with the core the holoenzyme is formed, which can initiate transcription. Requires Mg(2+) as cofactor. Zn(2+) is required as a cofactor.

The catalysed reaction is RNA(n) + a ribonucleoside 5'-triphosphate = RNA(n+1) + diphosphate. Functionally, DNA-dependent RNA polymerase catalyzes the transcription of DNA into RNA using the four ribonucleoside triphosphates as substrates. The polypeptide is DNA-directed RNA polymerase subunit beta' (Clostridium beijerinckii (strain ATCC 51743 / NCIMB 8052) (Clostridium acetobutylicum)).